Consider the following 474-residue polypeptide: Aspartate ammonia-lyase (474 aa).

Thr105, Ser144, Thr145, Asn146, and Thr191 together coordinate L-aspartate. The segment at 322-331 (GSSIMPGKVN) is SS loop. Residue Ser323 is the Proton acceptor of the active site. Residues Ser324 and Lys329 each coordinate L-aspartate.

Belongs to the class-II fumarase/aspartase family. Aspartase subfamily. As to quaternary structure, homotetramer.

It catalyses the reaction L-aspartate = fumarate + NH4(+). The catalysed reaction is L-phenylalanine = (E)-cinnamate + NH4(+). Does not require any divalent metal ion for activation of catalysis, but the activity is slightly increased in the presence of Mg(2+), Mn(2+), Ca(2+) or Co(2+). In terms of biological role, catalyzes the reversible conversion of L-aspartate to fumarate and ammonia. Can also utilize L-phenylalanine to form cinnamic acid. Exhibits the highest specific activity towards L-phenylalanine, but catalytic efficiency is 3-fold higher with L-aspartate. The protein is Aspartate ammonia-lyase of Pseudomonas aeruginosa (strain ATCC 15692 / DSM 22644 / CIP 104116 / JCM 14847 / LMG 12228 / 1C / PRS 101 / PAO1).